We begin with the raw amino-acid sequence, 65 residues long: Antitoxin VapB32 (65 aa).

A disordered region spans residues 46–65 (ALGGTDPQATAAPRRRTSPR).

Its function is as follows. Antitoxin component of a type II toxin-antitoxin (TA) system. The sequence is that of Antitoxin VapB32 (vapB32) from Mycobacterium tuberculosis (strain CDC 1551 / Oshkosh).